We begin with the raw amino-acid sequence, 336 residues long: HTH-type transcriptional repressor PurR (336 aa).

Positions 2 to 56 (ATIKDVARLAGVSTTTVSHVINKTRFVAETTQEKVMEAVKQLNYAPSAVARSLKC) constitute an HTH lacI-type domain. A DNA-binding region (H-T-H motif) is located at residues 4–23 (IKDVARLAGVSTTTVSHVIN). The DNA-binding element occupies 48-56 (SAVARSLKC). Hypoxanthine-binding residues include Phe-73, Lys-189, Phe-220, and Asp-274.

As to quaternary structure, homodimer.

It participates in purine metabolism; purine nucleotide biosynthesis [regulation]. Functionally, is the main repressor of the genes involved in the de novo synthesis of purine nucleotides, regulating purB, purC, purEK, purF, purHD, purL, purMN and guaBA expression. PurR is allosterically activated to bind its cognate DNA by binding the purine corepressors, hypoxanthine or guanine, thereby effecting transcription repression. The protein is HTH-type transcriptional repressor PurR of Vibrio cholerae serotype O1 (strain ATCC 39315 / El Tor Inaba N16961).